A 418-amino-acid polypeptide reads, in one-letter code: CinA-like protein (418 aa).

It belongs to the CinA family.

The sequence is that of CinA-like protein from Leptospira borgpetersenii serovar Hardjo-bovis (strain L550).